The sequence spans 412 residues: Cytochrome p450 CYP199A2 (412 aa).

Substrate-binding positions include 94–97 (RPPS) and serine 247. Position 361 (cysteine 361) interacts with heme.

This sequence belongs to the cytochrome P450 family. In terms of assembly, interacts with the ferredoxin-like iron-sulfur protein ThcC. Heme serves as cofactor.

The protein resides in the cytoplasm. It carries out the reaction 4-methoxybenzoate + AH2 + O2 = 4-hydroxybenzoate + formaldehyde + A + H2O. In terms of biological role, the oxidative demethylation of 4-methoxybenzoate requires the participation of the monooxygenase CYP199A2, the ferredoxin-like protein ThcC/RPA1872 and a ferredoxin reductase to mediate the transfer of electrons from NADH to CYP199A2. It is also active with 4-ethylbenzoate. The sequence is that of Cytochrome p450 CYP199A2 from Rhodopseudomonas palustris (strain ATCC BAA-98 / CGA009).